A 134-amino-acid polypeptide reads, in one-letter code: MDSDSTVTSLEENTENFCTNPTRDILAEGITNLFKPTIERLDERVASTIQLQAELRGQLDALAAQLRDIEKAQSQIPEFADKVKELLNVKHKVTVISNVLVTSQERLTGLHKLIEKEQRRRQALLDSALSTNIS.

Positions 50-124 form a coiled coil; the sequence is QLQAELRGQL…EKEQRRRQAL (75 aa).

Belongs to the SNAPIN family. In terms of assembly, component of the biogenesis of lysosome-related organelles complex-1 (BLOC-1) composed of Blos1, Blos2, Blos3, Blos4, Dysb, Muted, Pldn and Snapin. Interacts with Blos2 and Dysb.

The protein localises to the membrane. It is found in the cytoplasm. Its subcellular location is the cytosol. In terms of biological role, component of the biogenesis of lysosome-related organelles complex-1 (BLOC-1) involved in pigment granule biogenesis. May participate in the coupling of lysosomes to microtubule plus-end-directed kinesin motor. The chain is SNAPIN protein homolog from Drosophila melanogaster (Fruit fly).